Here is a 600-residue protein sequence, read N- to C-terminus: MNHQKYIRNFSIIAHIDHGKSTLADRLIEHCGGLQAREMSQQVLDSMDIEKERGITIKAQTVRLVYKAKDGNTYYLNLMDTPGHVDFAYEVSRSLAACEGSLLVVDSTQGVEAQTLANVYQAIENDHEIVLVLNKLDLPASEPEQVKQQIEDIIGIDTSEAVLISAKSGIGIDLVLEAIVSKLPPPKESSSDILKALLVDSWYDPYLGVVILVRVIDGYLRKNMRIKMMATNSVYTVENVGYFTPKKHISDVLHAGEIGFFTAAIKQVADCKVGDTITDEKKPCEQALPGFKPQLPVVFCGLYPTDSSEFEHLKDSLAKLRLNDASFEYEMESSSALGVGFRCGFLGLLHLEIIQERLSREFNLDLITTAPSVVYKIHMRDGENLEIHNPADLPDLQKIESMEEPWIKATIMVPDEFLGAVLSLCTEKRGMQLDHSYIANRAKIIYKLPLNEIVYDFYDRLKSCSKGYASFEWQMDVYEPSELVKLGILVNAEVVDALSTIVHRSRAEQRGRALCVRLKDLIPRQQIDIAIQASIGSRIIARETIKALRKDVLSKCYGGDISRKRKLLEKQKAGKKRMRQYGNIEIPQSAFIAALKIGDE.

Residues 5-187 (KYIRNFSIIA…AIVSKLPPPK (183 aa)) form the tr-type G domain. Residues 17-22 (DHGKST) and 134-137 (NKLD) each bind GTP.

The protein belongs to the TRAFAC class translation factor GTPase superfamily. Classic translation factor GTPase family. LepA subfamily.

It localises to the cell inner membrane. It carries out the reaction GTP + H2O = GDP + phosphate + H(+). Functionally, required for accurate and efficient protein synthesis under certain stress conditions. May act as a fidelity factor of the translation reaction, by catalyzing a one-codon backward translocation of tRNAs on improperly translocated ribosomes. Back-translocation proceeds from a post-translocation (POST) complex to a pre-translocation (PRE) complex, thus giving elongation factor G a second chance to translocate the tRNAs correctly. Binds to ribosomes in a GTP-dependent manner. This is Elongation factor 4 from Rickettsia rickettsii (strain Iowa).